Consider the following 295-residue polypeptide: Probable palmitoyltransferase ZDHHC24 (295 aa).

Topologically, residues 1–20 (MTSFMSRVWCKVESTGRQLP) are cytoplasmic. Residues 21 to 41 (IVLNAVLVFSITAEVSYLVLV) form a helical membrane-spanning segment. Topologically, residues 42–60 (EAPFEPEQKKTDWSTIWTG) are extracellular. Residues 61 to 81 (LHLFAQYFMLGNITWNASLFV) traverse the membrane as a helical segment. The Cytoplasmic portion of the chain corresponds to 82-151 (KTNPSIRGVF…HNYRYFLTCL (70 aa)). Residues 102–152 (RYCYNCETHTPPRCSHCYDCNVCVLRRDHHCVFFGQCVGFHNYRYFLTCLL) enclose the DHHC domain. Cysteine 132 functions as the S-palmitoyl cysteine intermediate in the catalytic mechanism. A helical transmembrane segment spans residues 152-172 (LFMWAGLLYAVVMNAEVFIFI). Topologically, residues 173–176 (LKEG) are extracellular. The helical transmembrane segment at 177–197 (VTFHSVMLLLVPWIMLVSGQV) threads the bilayer. Topologically, residues 198-203 (TTRAFA) are cytoplasmic. A helical membrane pass occupies residues 204-224 (FAFIADTCVVGFLLVAAFLFF). Residues 225 to 295 (HVALMLRGQT…SLEPKKQAVH (71 aa)) are Extracellular-facing.

This sequence belongs to the DHHC palmitoyltransferase family.

It is found in the membrane. It carries out the reaction L-cysteinyl-[protein] + hexadecanoyl-CoA = S-hexadecanoyl-L-cysteinyl-[protein] + CoA. Functionally, probable palmitoyltransferase that could catalyze the addition of palmitate onto various protein substrates. The chain is Probable palmitoyltransferase ZDHHC24 from Danio rerio (Zebrafish).